Consider the following 339-residue polypeptide: Glyceraldehyde-3-phosphate dehydrogenase (339 aa).

NAD(+)-binding positions include Arg-12–Ile-13, Asp-39, Arg-84, and Ser-127. D-glyceraldehyde 3-phosphate is bound by residues Ser-157 to Thr-159, Thr-188, Arg-203, Thr-216 to Gly-217, and Arg-239. The active-site Nucleophile is Cys-158. Residue Asn-320 participates in NAD(+) binding.

This sequence belongs to the glyceraldehyde-3-phosphate dehydrogenase family. Homotetramer.

The protein localises to the cytoplasm. It catalyses the reaction D-glyceraldehyde 3-phosphate + phosphate + NAD(+) = (2R)-3-phospho-glyceroyl phosphate + NADH + H(+). It participates in carbohydrate degradation; glycolysis; pyruvate from D-glyceraldehyde 3-phosphate: step 1/5. Its function is as follows. Catalyzes the oxidative phosphorylation of glyceraldehyde 3-phosphate (G3P) to 1,3-bisphosphoglycerate (BPG) using the cofactor NAD. The first reaction step involves the formation of a hemiacetal intermediate between G3P and a cysteine residue, and this hemiacetal intermediate is then oxidized to a thioester, with concomitant reduction of NAD to NADH. The reduced NADH is then exchanged with the second NAD, and the thioester is attacked by a nucleophilic inorganic phosphate to produce BPG. In Mycobacterium leprae (strain TN), this protein is Glyceraldehyde-3-phosphate dehydrogenase (gapA).